The chain runs to 380 residues: Dual-specificity RNA methyltransferase RlmN (380 aa).

The Proton acceptor role is filled by E94. Residues 100–339 (DGDRATLCVS…VTVRKTRGDD (240 aa)) enclose the Radical SAM core domain. C107 and C344 are disulfide-bonded. The [4Fe-4S] cluster site is built by C114, C118, and C121. Residues 168-169 (GE), S200, 222-224 (SLH), and N301 each bind S-adenosyl-L-methionine. Residue C344 is the S-methylcysteine intermediate of the active site.

This sequence belongs to the radical SAM superfamily. RlmN family. [4Fe-4S] cluster serves as cofactor.

The protein localises to the cytoplasm. The catalysed reaction is adenosine(2503) in 23S rRNA + 2 reduced [2Fe-2S]-[ferredoxin] + 2 S-adenosyl-L-methionine = 2-methyladenosine(2503) in 23S rRNA + 5'-deoxyadenosine + L-methionine + 2 oxidized [2Fe-2S]-[ferredoxin] + S-adenosyl-L-homocysteine. It catalyses the reaction adenosine(37) in tRNA + 2 reduced [2Fe-2S]-[ferredoxin] + 2 S-adenosyl-L-methionine = 2-methyladenosine(37) in tRNA + 5'-deoxyadenosine + L-methionine + 2 oxidized [2Fe-2S]-[ferredoxin] + S-adenosyl-L-homocysteine. Specifically methylates position 2 of adenine 2503 in 23S rRNA and position 2 of adenine 37 in tRNAs. m2A2503 modification seems to play a crucial role in the proofreading step occurring at the peptidyl transferase center and thus would serve to optimize ribosomal fidelity. The protein is Dual-specificity RNA methyltransferase RlmN of Vibrio atlanticus (strain LGP32) (Vibrio splendidus (strain Mel32)).